The following is a 161-amino-acid chain: Vasotocin-neurophysin VT (161 aa).

An N-terminal signal peptide occupies residues 1 to 22 (MSAMGWTLLAAALLAISAQSNG). A disulfide bridge links cysteine 23 with cysteine 28. Residue glycine 31 is modified to Glycine amide. Disulfide bonds link cysteine 43/cysteine 91, cysteine 46/cysteine 58, cysteine 52/cysteine 81, cysteine 59/cysteine 71, cysteine 99/cysteine 111, cysteine 105/cysteine 123, and cysteine 112/cysteine 117.

This sequence belongs to the vasopressin/oxytocin family.

It localises to the secreted. Vasotocin is an antidiuretic hormone. The protein is Vasotocin-neurophysin VT of Eptatretus stoutii (Pacific hagfish).